A 678-amino-acid polypeptide reads, in one-letter code: MTDYSKATDGTKVIHDDPWLEPYKEVIKRRHNQVKNTIQKLEESEGSLLKFSQGYEYFGFNVTKDGVNYREWLPSAHEVYLVGDFNQWNKTSHPLERDNYGRWSIFIPNNSNGECAIPHGSKIKIYLKLANGNFDYRIPAWIKRVEQTKENPVFDGVFWNPSKQYVFKNKSPMKPTELRIYEAHVGMSSELPEISTYSKFKDTVLPMVKELGYNCIQLMAVMEHAYYASFGYQVTNFFAISSRFGTPEELKEMIDKAHEMGLLVFLDVVHSHASKNVLDGLNQLDGTDHHYFHSGGRGNHELWDSRLFNYGNWEVMRFLLSNLRFYVDEYHFDGFRFDGVTSMIYTHHGLSPACSYDDYFGGAVDEDALNYLTLANVMLHTLNPSIVTIAEEVTGLATLCRPFSEGGGDFDYRLAMGIPDKWIELVKEKKDEDWNMGTIAHMLSNRRYKEKNIAYAESHDQSLVGDKTLAFWLMDKEMYTNMSVTTEETPIIDRGMSLHKMIRLITSSLGGDGYLNFMGNEFGHPEWVDFPREGNNNSLHHARRRWDLYRNPLLRYKQLRDFDIAMNKAEQEFRWLSSDFAYISLKHEDDKIIVFERASLIFIFNFHPSKSFSDYRIGSGVPGKFINVLDSDRKEFGGHVRIGKDNYHYTEDKPWHDRKYSLLIYIPSRTCLVLKKVD.

The (1,4-alpha-D-glucosyl)n site is built by Trp-88 and Lys-124. The Nucleophile role is filled by Asp-338. Residue Glu-391 is the Proton donor of the active site.

The protein belongs to the glycosyl hydrolase 13 family. GlgB subfamily. In terms of assembly, monomer.

It carries out the reaction Transfers a segment of a (1-&gt;4)-alpha-D-glucan chain to a primary hydroxy group in a similar glucan chain.. The protein operates within glycan biosynthesis; glycogen biosynthesis. Glycogen-branching enzyme participates in the glycogen biosynthetic process along with glycogenin and glycogen synthase. Generates alpha-1,6-glucosidic branches from alpha-1,4-linked glucose chains, to increase solubility of the glycogen polymer. In Dictyostelium discoideum (Social amoeba), this protein is 1,4-alpha-glucan-branching enzyme (glgB).